The sequence spans 347 residues: Rhodopsin (347 aa).

At 1–33 the chain is on the extracellular side; the sequence is TEGPDFYIPMVNTTGVVRSPYEYPQYYLVNPAA. The N-linked (GlcNAc...) asparagine glycan is linked to asparagine 12. Residues 34–58 form a helical membrane-spanning segment; sequence FAVLGAYMFFLIIIGFPINFLTLYV. Topologically, residues 59-70 are cytoplasmic; it reads TLEHKKLRTPLN. Residues 71–93 traverse the membrane as a helical segment; that stretch reads YILLNLAVADLFMVIGGFTTTMY. Topologically, residues 94–107 are extracellular; sequence SSMHGYFVLGRLGC. The cysteines at positions 107 and 184 are disulfide-linked. Residues 108-130 form a helical membrane-spanning segment; that stretch reads NIEGFFATLGGMISLWSLAVLAI. The short motif at 131–133 is the 'Ionic lock' involved in activated form stabilization element; the sequence is ERW. Residues 131-149 lie on the Cytoplasmic side of the membrane; that stretch reads ERWVVVCKPISNFRFGENH. A helical transmembrane segment spans residues 150–170; sequence AIMGVSLTWVMALACTVPPLV. Topologically, residues 171–199 are extracellular; sequence GWSRYIPEGMQCACGIDYYTRAEGYNNES. N-linked (GlcNAc...) asparagine glycosylation is present at asparagine 197. Residues 200-221 form a helical membrane-spanning segment; the sequence is FVIYMFTFHFLFPMFIIFFCYG. The Cytoplasmic segment spans residues 222–249; that stretch reads RLLCAVKEAAAAQQESETTQRAEREVTR. Residues 250–271 form a helical membrane-spanning segment; it reads MVILMVIGYLVCWLPYASVAWF. The Extracellular portion of the chain corresponds to 272–283; that stretch reads IFTHKGSEFGPL. Residues 284-305 form a helical membrane-spanning segment; the sequence is FMAVPSFFAKSSSIYNPIIYIC. N6-(retinylidene)lysine is present on lysine 293. Topologically, residues 306–347 are cytoplasmic; sequence MNKQFRQCMITTLFCGKNPFEGQEEDSSTKTEASSASSVSPA. Residue cysteine 320 is the site of S-palmitoyl cysteine attachment. The segment at 326-347 is disordered; the sequence is EGQEEDSSTKTEASSASSVSPA. A compositionally biased stretch (low complexity) spans 335–347; the sequence is KTEASSASSVSPA.

Belongs to the G-protein coupled receptor 1 family. Opsin subfamily. In terms of processing, phosphorylated on some or all of the serine and threonine residues present in the C-terminal region. Contains one covalently linked retinal chromophore.

Its subcellular location is the membrane. The protein localises to the cell projection. It localises to the cilium. The protein resides in the photoreceptor outer segment. Photoreceptor required for image-forming vision at low light intensity. While most salt water fish species use retinal as chromophore, most freshwater fish use 3-dehydroretinal, or a mixture of retinal and 3-dehydroretinal. Light-induced isomerization of 11-cis to all-trans retinal triggers a conformational change that activates signaling via G-proteins. Subsequent receptor phosphorylation mediates displacement of the bound G-protein alpha subunit by arrestin and terminates signaling. The protein is Rhodopsin (rho) of Sargocentron tiere (Blue lined squirrelfish).